We begin with the raw amino-acid sequence, 323 residues long: Pantothenate kinase (323 aa).

101–108 is a binding site for ATP; the sequence is GSVAVGKS.

The protein belongs to the prokaryotic pantothenate kinase family.

The protein localises to the cytoplasm. It carries out the reaction (R)-pantothenate + ATP = (R)-4'-phosphopantothenate + ADP + H(+). It participates in cofactor biosynthesis; coenzyme A biosynthesis; CoA from (R)-pantothenate: step 1/5. This chain is Pantothenate kinase, found in Xanthobacter autotrophicus (strain ATCC BAA-1158 / Py2).